A 450-amino-acid polypeptide reads, in one-letter code: Phosphoglucosamine mutase (450 aa).

Catalysis depends on S102, which acts as the Phosphoserine intermediate. The Mg(2+) site is built by S102, D243, D245, and D247. S102 is subject to Phosphoserine.

This sequence belongs to the phosphohexose mutase family. Requires Mg(2+) as cofactor. In terms of processing, activated by phosphorylation.

It catalyses the reaction alpha-D-glucosamine 1-phosphate = D-glucosamine 6-phosphate. Its function is as follows. Catalyzes the conversion of glucosamine-6-phosphate to glucosamine-1-phosphate. This chain is Phosphoglucosamine mutase, found in Allorhizobium ampelinum (strain ATCC BAA-846 / DSM 112012 / S4) (Agrobacterium vitis (strain S4)).